Here is a 488-residue protein sequence, read N- to C-terminus: Mannitol 2-dehydrogenase (488 aa).

An NAD(+)-binding site is contributed by 37–48; that stretch reads IVHVGVGGFHRA.

It belongs to the mannitol dehydrogenase family. In terms of assembly, monomer.

It catalyses the reaction D-mannitol + NAD(+) = D-fructose + NADH + H(+). Functionally, catalyzes the NAD(H)-dependent interconversion of D-fructose and D-mannitol in the mannitol metabolic pathway. This Aspergillus niger (strain ATCC MYA-4892 / CBS 513.88 / FGSC A1513) protein is Mannitol 2-dehydrogenase.